We begin with the raw amino-acid sequence, 673 residues long: MSKSFVLHSAFRPSGDQPEAIRRLEEGLEDGLAHQTLLGVTGSGKTFTIANVIADLQRPTMVLAPNKTLAAQLYGEMKEFFPENAVEYFVSYYDYYQPEAYVPSSDTFIEKDASVNEHIEQMRLSATKALLERRDVVVVASVSAIYGLGDPDLYLKMMLHLTVGMLIDQRAILRRLAELQYTRNDQAFQRGTFRVRGEVIDVFPAESDDIALRIELFDEEVERLSLFDPLTGHVEGTVPRYTIYPKTHYVTPRERIVQAMEEIKLELAERRKVLLANNKLLEEQRLTQRTQFDLEMMNELGYCSGIENYSRFLSGRGPGEPPPTLFDYLPADGLLVIDESHVTVPQIGGMYRGDRARKETLVEYGFRLPSALDNRPMKFEEFEALAPQTIYVSATPGAYELDKSGGEVVDQVVRPTGLLDPIIEVRPVATQVDDLLSEIRLRTAINERVLVTTLTKRMAEDLTEYLEEHGERVRYLHSDIDTVERMEIIRDLRLGEFDVLVGINLLREGLDMPEVSLVAILDADKEGFLRSERSLIQTIGRAARNVNGKAILYGDKITPSMAKAIGETERRREKQQRYNEEHGIVPQGLNKKVVDILQLGQGLAKTKAKGRGKAKAVEPAGLSAVDMTPKALQQKIHELEGQMMQHAQNLEFEEAAQIRDQLHQLRELFIAAS.

The 158-residue stretch at 26 to 183 folds into the Helicase ATP-binding domain; that stretch reads EGLEDGLAHQ…RRLAELQYTR (158 aa). 39-46 is a binding site for ATP; it reads GVTGSGKT. The short motif at 92-115 is the Beta-hairpin element; it reads YYDYYQPEAYVPSSDTFIEKDASV. The 167-residue stretch at 431-597 folds into the Helicase C-terminal domain; sequence QVDDLLSEIR…GLNKKVVDIL (167 aa). One can recognise a UVR domain in the interval 633 to 668; the sequence is QQKIHELEGQMMQHAQNLEFEEAAQIRDQLHQLREL.

It belongs to the UvrB family. As to quaternary structure, forms a heterotetramer with UvrA during the search for lesions. Interacts with UvrC in an incision complex.

Its subcellular location is the cytoplasm. The UvrABC repair system catalyzes the recognition and processing of DNA lesions. A damage recognition complex composed of 2 UvrA and 2 UvrB subunits scans DNA for abnormalities. Upon binding of the UvrA(2)B(2) complex to a putative damaged site, the DNA wraps around one UvrB monomer. DNA wrap is dependent on ATP binding by UvrB and probably causes local melting of the DNA helix, facilitating insertion of UvrB beta-hairpin between the DNA strands. Then UvrB probes one DNA strand for the presence of a lesion. If a lesion is found the UvrA subunits dissociate and the UvrB-DNA preincision complex is formed. This complex is subsequently bound by UvrC and the second UvrB is released. If no lesion is found, the DNA wraps around the other UvrB subunit that will check the other stand for damage. The sequence is that of UvrABC system protein B from Klebsiella pneumoniae subsp. pneumoniae (strain ATCC 700721 / MGH 78578).